Reading from the N-terminus, the 967-residue chain is Alanine--tRNA ligase, cytoplasmic (967 aa).

4 residues coordinate Zn(2+): histidine 605, histidine 609, cysteine 724, and histidine 728.

This sequence belongs to the class-II aminoacyl-tRNA synthetase family. As to quaternary structure, monomer. Zn(2+) serves as cofactor. In terms of processing, the N-terminus is blocked.

It localises to the cytoplasm. It catalyses the reaction tRNA(Ala) + L-alanine + ATP = L-alanyl-tRNA(Ala) + AMP + diphosphate. Functionally, catalyzes the attachment of alanine to tRNA(Ala) in a two-step reaction: alanine is first activated by ATP to form Ala-AMP and then transferred to the acceptor end of tRNA(Ala). Also edits incorrectly charged tRNA(Ala) via its editing domain. In Bombyx mori (Silk moth), this protein is Alanine--tRNA ligase, cytoplasmic.